Reading from the N-terminus, the 360-residue chain is Phospho-N-acetylmuramoyl-pentapeptide-transferase (360 aa).

10 helical membrane-spanning segments follow: residues 21-41 (YITVRAILALLTALFISLWIG), 73-93 (TMGGVMILFSIGVSTLLWANL), 94-114 (ANSYIWVCLFVLFGYGAIGFV), 132-152 (WKYFWMSVVALVAILWLYWLG), 168-188 (IMPQLGLFYIVLSYFVIVGTG), 199-219 (GLAIMPTALVAGAFALIAWAT), 239-259 (VVVFCTAIVGASLGFLWFNTY), 263-283 (VFMGDVGSLALGGALGVVAIL), 288-308 (FLLVIMGGVFVVEALSVILQV), and 338-358 (VIIRFWIISLMLVLMGLVTLK).

This sequence belongs to the glycosyltransferase 4 family. MraY subfamily. Mg(2+) is required as a cofactor.

Its subcellular location is the cell inner membrane. It carries out the reaction UDP-N-acetyl-alpha-D-muramoyl-L-alanyl-gamma-D-glutamyl-meso-2,6-diaminopimeloyl-D-alanyl-D-alanine + di-trans,octa-cis-undecaprenyl phosphate = di-trans,octa-cis-undecaprenyl diphospho-N-acetyl-alpha-D-muramoyl-L-alanyl-D-glutamyl-meso-2,6-diaminopimeloyl-D-alanyl-D-alanine + UMP. Its pathway is cell wall biogenesis; peptidoglycan biosynthesis. Catalyzes the initial step of the lipid cycle reactions in the biosynthesis of the cell wall peptidoglycan: transfers peptidoglycan precursor phospho-MurNAc-pentapeptide from UDP-MurNAc-pentapeptide onto the lipid carrier undecaprenyl phosphate, yielding undecaprenyl-pyrophosphoryl-MurNAc-pentapeptide, known as lipid I. The chain is Phospho-N-acetylmuramoyl-pentapeptide-transferase from Haemophilus influenzae (strain 86-028NP).